The following is a 581-amino-acid chain: FAD-linked oxidoreductase easE (581 aa).

A signal peptide spans 1–25 (MYRLLGPLACLALAWFFTWAPSGRC). Asn-44 and Asn-73 each carry an N-linked (GlcNAc...) asparagine glycan. One can recognise an FAD-binding PCMH-type domain in the interval 122–306 (HQGRIPLYSA…AQATIRVFPD (185 aa)). Asn-369 carries an N-linked (GlcNAc...) asparagine glycan.

The protein belongs to the oxygen-dependent FAD-linked oxidoreductase family. Requires FAD as cofactor.

The protein operates within alkaloid biosynthesis; ergot alkaloid biosynthesis. Functionally, FAD-linked oxidoreductase; part of the gene cluster that mediates the biosynthesis of fungal ergot alkaloid. DmaW catalyzes the first step of ergot alkaloid biosynthesis by condensing dimethylallyl diphosphate (DMAP) and tryptophan to form 4-dimethylallyl-L-tryptophan. The second step is catalyzed by the methyltransferase easF that methylates 4-dimethylallyl-L-tryptophan in the presence of S-adenosyl-L-methionine, resulting in the formation of 4-dimethylallyl-L-abrine. The catalase easC and the FAD-dependent oxidoreductase easE then transform 4-dimethylallyl-L-abrine to chanoclavine-I which is further oxidized by easD in the presence of NAD(+), resulting in the formation of chanoclavine-I aldehyde. Agroclavine dehydrogenase easG then mediates the conversion of chanoclavine-I aldehyde to agroclavine via a non-enzymatic adduct reaction: the substrate is an iminium intermediate that is formed spontaneously from chanoclavine-I aldehyde in the presence of glutathione. Further conversion of agroclavine to paspalic acid is a two-step process involving oxidation of agroclavine to elymoclavine and of elymoclavine to paspalic acid, the second step being performed by the elymoclavine oxidase cloA. However, cloA does not encode a functional enzyme indicating that C.fusiformis terminates its ergot alkaloid pathway at elymoclavine. The sequence is that of FAD-linked oxidoreductase easE from Claviceps fusiformis (Ergot fungus).